The chain runs to 449 residues: Protein trichome birefringence-like 35 (449 aa).

Residues 12–29 form a helical; Signal-anchor for type II membrane protein membrane-spanning segment; the sequence is LPLAGLLFILVVTFMILF. The short motif at 185-187 is the GDS motif element; it reads GDS. Residues 428–442 carry the DCXHWCLPGXXDXWN motif motif; sequence DCTHWCVPGVPDVWN.

Belongs to the PC-esterase family. TBL subfamily.

The protein localises to the membrane. May act as a bridging protein that binds pectin and other cell wall polysaccharides. Probably involved in maintaining esterification of pectins. May be involved in the specific O-acetylation of cell wall polymers. The sequence is that of Protein trichome birefringence-like 35 (TBL35) from Arabidopsis thaliana (Mouse-ear cress).